We begin with the raw amino-acid sequence, 295 residues long: 33 kDa chaperonin (295 aa).

2 disulfides stabilise this stretch: Cys-230/Cys-232 and Cys-264/Cys-267.

This sequence belongs to the HSP33 family. Post-translationally, under oxidizing conditions two disulfide bonds are formed involving the reactive cysteines. Under reducing conditions zinc is bound to the reactive cysteines and the protein is inactive.

Its subcellular location is the cytoplasm. Its function is as follows. Redox regulated molecular chaperone. Protects both thermally unfolding and oxidatively damaged proteins from irreversible aggregation. Plays an important role in the bacterial defense system toward oxidative stress. The chain is 33 kDa chaperonin from Ectopseudomonas mendocina (strain ymp) (Pseudomonas mendocina).